The primary structure comprises 157 residues: MSRNNEELQGISLLGNQKTQYPTGYAPEILEAFDNKHPDNDYFVKFVCPEFTSLCPMTGQPDFATIVIRYIPHIKMVESKSLKLYLFSFRNHGDFHEDCVNIIMKDLIALMDPKYIEVFGEFTPRGGIAVHPFANYGKAGTEFEALARKRLFEHDAQ.

The Thioimide intermediate role is filled by Cys55. The active-site Proton donor is the Asp62. Substrate-binding positions include 77–79 (VES) and 96–97 (HE).

Belongs to the GTP cyclohydrolase I family. QueF type 1 subfamily.

Its subcellular location is the cytoplasm. The enzyme catalyses 7-aminomethyl-7-carbaguanine + 2 NADP(+) = 7-cyano-7-deazaguanine + 2 NADPH + 3 H(+). It participates in tRNA modification; tRNA-queuosine biosynthesis. Functionally, catalyzes the NADPH-dependent reduction of 7-cyano-7-deazaguanine (preQ0) to 7-aminomethyl-7-deazaguanine (preQ1). The polypeptide is NADPH-dependent 7-cyano-7-deazaguanine reductase (Neisseria gonorrhoeae (strain ATCC 700825 / FA 1090)).